Reading from the N-terminus, the 333-residue chain is Holliday junction branch migration complex subunit RuvB (333 aa).

The tract at residues 1–181 (MTRILDNDLI…FGITGHMEYY (181 aa)) is large ATPase domain (RuvB-L). Residues Leu20, Arg21, Gly62, Lys65, Thr66, Thr67, 128 to 130 (EDF), Arg171, Tyr181, and Arg218 each bind ATP. Residue Thr66 participates in Mg(2+) binding. The tract at residues 182–252 (QTADLTEIVE…ITDKALTMLD (71 aa)) is small ATPAse domain (RuvB-S). A head domain (RuvB-H) region spans residues 255 to 333 (QEGLDYVDQK…HLGYPYEKKH (79 aa)). Residues Arg291, Arg310, Arg312, and Arg315 each coordinate DNA.

This sequence belongs to the RuvB family. Homohexamer. Forms an RuvA(8)-RuvB(12)-Holliday junction (HJ) complex. HJ DNA is sandwiched between 2 RuvA tetramers; dsDNA enters through RuvA and exits via RuvB. An RuvB hexamer assembles on each DNA strand where it exits the tetramer. Each RuvB hexamer is contacted by two RuvA subunits (via domain III) on 2 adjacent RuvB subunits; this complex drives branch migration. In the full resolvosome a probable DNA-RuvA(4)-RuvB(12)-RuvC(2) complex forms which resolves the HJ.

The protein localises to the cytoplasm. The enzyme catalyses ATP + H2O = ADP + phosphate + H(+). The RuvA-RuvB-RuvC complex processes Holliday junction (HJ) DNA during genetic recombination and DNA repair, while the RuvA-RuvB complex plays an important role in the rescue of blocked DNA replication forks via replication fork reversal (RFR). RuvA specifically binds to HJ cruciform DNA, conferring on it an open structure. The RuvB hexamer acts as an ATP-dependent pump, pulling dsDNA into and through the RuvAB complex. RuvB forms 2 homohexamers on either side of HJ DNA bound by 1 or 2 RuvA tetramers; 4 subunits per hexamer contact DNA at a time. Coordinated motions by a converter formed by DNA-disengaged RuvB subunits stimulates ATP hydrolysis and nucleotide exchange. Immobilization of the converter enables RuvB to convert the ATP-contained energy into a lever motion, pulling 2 nucleotides of DNA out of the RuvA tetramer per ATP hydrolyzed, thus driving DNA branch migration. The RuvB motors rotate together with the DNA substrate, which together with the progressing nucleotide cycle form the mechanistic basis for DNA recombination by continuous HJ branch migration. Branch migration allows RuvC to scan DNA until it finds its consensus sequence, where it cleaves and resolves cruciform DNA. This chain is Holliday junction branch migration complex subunit RuvB, found in Streptococcus equi subsp. zooepidemicus (strain MGCS10565).